Consider the following 2285-residue polypeptide: Protein Ycf2 (2285 aa).

1638 to 1645 (GSIGTGRS) provides a ligand contact to ATP.

The protein belongs to the Ycf2 family.

It is found in the plastid. The protein localises to the chloroplast stroma. Functionally, probable ATPase of unknown function. Its presence in a non-photosynthetic plant (Epifagus virginiana) and experiments in tobacco indicate that it has an essential function which is probably not related to photosynthesis. This chain is Protein Ycf2, found in Populus trichocarpa (Western balsam poplar).